The following is a 494-amino-acid chain: MSVLLETSAGDIVIDLLVDYAPKMCENFLKLCKVKYYNFSPIHSIQKSFSFQTGDPLGPLSSESDGGQSIWGLLSGDPSEKTFPALFHPKLKHLERGTVSMATVPHPSDPDTRLAGSQFIVTLGDNTDYLDGKAAIFGKVVEGFDVLEKINDAIVDERGHPLVDIRIKHTVILDDPYPDPAGMREPSASPPPSKAQLATVRITEGEELLDVEASEEAAAEAERRRREREAAAQALTLEMMGDLPFAEVKPPENVLFVCKLNPVTTDEDLELIFSRFGKILSCEVIRDQKTGDSLQYAFIEFEDKKSCEEAYSKMDSVLIDDRRIHVDFSQSVSKLSDVWRSETNSKRKSAARRGGGGWGGVDELEKWRKYRDEDVEWRNDDSYQMVHGVEDLKGRHDGDKPPVRDSRPDVGGGRDRSTSRRSRSPRRDRDRRDDRDNRRGPRDADRRRDDRDLDRRDRRGDRSRDRYRDRDYNDRDHRRGRDRDNRGRDDYRRR.

A PPIase cyclophilin-type domain is found at 1 to 172 (MSVLLETSAG…VDIRIKHTVI (172 aa)). A disordered region spans residues 176–196 (PYPDPAGMREPSASPPPSKAQ). Residues 206 to 240 (EELLDVEASEEAAAEAERRRREREAAAQALTLEMM) are a coiled coil. Positions 253-331 (NVLFVCKLNP…RRIHVDFSQS (79 aa)) constitute an RRM domain. Composition is skewed to basic and acidic residues over residues 391 to 418 (DLKG…DRST) and 425 to 494 (PRRD…YRRR). Residues 391 to 494 (DLKGRHDGDK…NRGRDDYRRR (104 aa)) are disordered.

The protein belongs to the cyclophilin-type PPIase family. PPIL4 subfamily.

It is found in the nucleus. It catalyses the reaction [protein]-peptidylproline (omega=180) = [protein]-peptidylproline (omega=0). PPIases accelerate the folding of proteins. It catalyzes the cis-trans isomerization of proline imidic peptide bonds in oligopeptides. This chain is Peptidyl-prolyl cis-trans isomerase-like 4 (cyp-6), found in Neurospora crassa (strain ATCC 24698 / 74-OR23-1A / CBS 708.71 / DSM 1257 / FGSC 987).